A 236-amino-acid chain; its full sequence is Peroxisomal membrane protein PMP27 (236 aa).

The protein belongs to the peroxin-11 family. In terms of assembly, homooligomer. Interacts with PEX34.

The protein localises to the peroxisome membrane. Functionally, involved in peroxisomal proliferation. Promotes peroxisome division and biogenesis. This chain is Peroxisomal membrane protein PMP27 (PEX11), found in Saccharomyces cerevisiae (strain ATCC 204508 / S288c) (Baker's yeast).